Here is a 314-residue protein sequence, read N- to C-terminus: Olfactory receptor 1E5 (314 aa).

Residues 1 to 25 (MMGQNQTSISDFLLLGLPIQPEQQN) are Extracellular-facing. An N-linked (GlcNAc...) asparagine glycan is attached at asparagine 5. A helical membrane pass occupies residues 26–49 (LCYALFLAMYLTTLLGNLLIIVLI). Residues 50 to 57 (RLDSHLHT) lie on the Cytoplasmic side of the membrane. Residues 58–79 (PMYLFLSNLSFSDLCFSSVTIP) form a helical membrane-spanning segment. Residues 80–100 (KLLQNMQNQDPSIPYADCLTQ) are Extracellular-facing. An intrachain disulfide couples cysteine 97 to cysteine 189. The chain crosses the membrane as a helical span at residues 101 to 120 (MYFFLLFGDLESFLLVAMAY). The Cytoplasmic portion of the chain corresponds to 121–139 (DRYVAICFPLHYTAIMSPM). Residues 140-158 (LCLSLVALSWVLTTFHAML) traverse the membrane as a helical segment. The Extracellular portion of the chain corresponds to 159-196 (HTLLMARLCFCADNVIPHFFCDMSALLKLACSDTRVNE). A helical membrane pass occupies residues 197–219 (WVIFIMGGLIVVIPFLLILGSYA). The Cytoplasmic segment spans residues 220 to 236 (RIVSSILKVPSSKGICK). A helical transmembrane segment spans residues 237–260 (AFSTCGSHLSVVSLFYGTIIGLYL). At 261–272 (CPSANSSTLKET) the chain is on the extracellular side. Residue asparagine 265 is glycosylated (N-linked (GlcNAc...) asparagine). A helical membrane pass occupies residues 273–292 (VMAMMYTVVTPMLNPFIYSL). The Cytoplasmic portion of the chain corresponds to 293–314 (RNRDMKGALERVIXKRKNPFLL).

It belongs to the G-protein coupled receptor 1 family.

It is found in the cell membrane. Functionally, odorant receptor. This is Olfactory receptor 1E5 (OR1E5) from Pan troglodytes (Chimpanzee).